A 90-amino-acid chain; its full sequence is Mitochondrial import inner membrane translocase subunit Tim10 (90 aa).

The Twin CX3C motif motif lies at 29 to 54 (CHRKCVPPHYKEAELSKGESVCLDRC). 2 disulfides stabilise this stretch: Cys-29–Cys-54 and Cys-33–Cys-50.

It belongs to the small Tim family. Heterohexamer; composed of 3 copies of TIMM9 and 3 copies of TIMM10/TIM10A, named soluble 70 kDa complex. The complex forms a 6-bladed alpha-propeller structure and associates with the TIMM22 component of the TIM22 complex. Interacts with multi-pass transmembrane proteins in transit. Also forms a complex composed of TIMM9, TIMM10/TIM10A and FXC1/TIM10B.

The protein localises to the mitochondrion inner membrane. Mitochondrial intermembrane chaperone that participates in the import and insertion of multi-pass transmembrane proteins into the mitochondrial inner membrane. May also be required for the transfer of beta-barrel precursors from the TOM complex to the sorting and assembly machinery (SAM complex) of the outer membrane. Acts as a chaperone-like protein that protects the hydrophobic precursors from aggregation and guide them through the mitochondrial intermembrane space. The sequence is that of Mitochondrial import inner membrane translocase subunit Tim10 (TIMM10) from Bos taurus (Bovine).